We begin with the raw amino-acid sequence, 344 residues long: L-rhamnose-proton symporter (344 aa).

A run of 10 helical transmembrane segments spans residues 4–24 (AITMGIFWHLIGAASAACFYA), 38–58 (WSVGGIVSWIILPWAISALLL), 68–88 (FSLSTLLPVFLFGAMWGIGNI), 101–121 (MGIGIAIGITLIVGTLMTPII), 137–157 (TLLGVLVALIGVGIVTRAGQL), 175–195 (LVLAVMCGIFSAGMSFAMNAA), 214–234 (LPSYVVIMGGGAIINLGFCFI), 259–279 (VLLSTLGGLMWYLQFFFYAWG), 290–310 (ISWMLHMSFYVLCGGIVGLVL), and 323–343 (VLSLGCVVIIVAANIVGIGMA).

Belongs to the L-rhamnose transporter (TC 2.A.7.6) family.

It is found in the cell inner membrane. The catalysed reaction is L-rhamnopyranose(in) + H(+)(in) = L-rhamnopyranose(out) + H(+)(out). Functionally, uptake of L-rhamnose across the cytoplasmic membrane with the concomitant transport of protons into the cell (symport system). The protein is L-rhamnose-proton symporter of Escherichia coli (strain ATCC 8739 / DSM 1576 / NBRC 3972 / NCIMB 8545 / WDCM 00012 / Crooks).